Consider the following 123-residue polypeptide: Anti-lipopolysaccharide factor (123 aa).

Positions 1–26 (MRTRVMAGLCVALVVMCLYMPQPCEA) are cleaved as a signal peptide. A disulfide bridge connects residues cysteine 55 and cysteine 76.

Strong expression in hemocytes, heart and muscle, with weaker expression detected in gills and hepatopancreas. No expression detected in eyes.

The protein localises to the secreted. Its function is as follows. Binds to bacterial LPS and may specifically inhibit the LPS-mediated activation of the hemolymph coagulation. It has a strong antibacterial effect especially on the growth of Gram-negative bacteria. The sequence is that of Anti-lipopolysaccharide factor from Scylla serrata (Mud crab).